We begin with the raw amino-acid sequence, 542 residues long: ATP synthase subunit beta (542 aa).

Residues 1–50 show a composition bias toward low complexity; sequence MAKTPAKAPAAAAKPAAVKKPAAPKAAAAPKAAAVATPAAKKPAAPKAAP. The interval 1–61 is disordered; it reads MAKTPAKAPA…SKVAGTREKP (61 aa). Residue 216–223 coordinates ATP; it reads GGAGVGKT.

The protein belongs to the ATPase alpha/beta chains family. F-type ATPases have 2 components, CF(1) - the catalytic core - and CF(0) - the membrane proton channel. CF(1) has five subunits: alpha(3), beta(3), gamma(1), delta(1), epsilon(1). CF(0) has three main subunits: a(1), b(2) and c(9-12). The alpha and beta chains form an alternating ring which encloses part of the gamma chain. CF(1) is attached to CF(0) by a central stalk formed by the gamma and epsilon chains, while a peripheral stalk is formed by the delta and b chains.

It is found in the cell inner membrane. The enzyme catalyses ATP + H2O + 4 H(+)(in) = ADP + phosphate + 5 H(+)(out). In terms of biological role, produces ATP from ADP in the presence of a proton gradient across the membrane. The catalytic sites are hosted primarily by the beta subunits. The sequence is that of ATP synthase subunit beta from Caulobacter sp. (strain K31).